The sequence spans 440 residues: UPF0761 membrane protein Rru_A2625 (440 aa).

Transmembrane regions (helical) follow at residues 29–49 (ILATAGSFTILVLRALITHDI), 61–81 (LLALVPLIAIALAILAAFPGF), 117–137 (GLTALGVAGLTLTAIILLLTI), 157–177 (LLVYWSVLTGGPLLMGLSFSL), 201–221 (PTLGPPLLSLTAMTLLYMLVP), 224–244 (PVPLFHALAGALVATLASALL), and 264–284 (ALAALPAFLVWMYLSWAVVLM).

It belongs to the UPF0761 family.

The protein resides in the cell inner membrane. The sequence is that of UPF0761 membrane protein Rru_A2625 from Rhodospirillum rubrum (strain ATCC 11170 / ATH 1.1.1 / DSM 467 / LMG 4362 / NCIMB 8255 / S1).